Reading from the N-terminus, the 162-residue chain is MGLETEKADVQLFMDDDSYSRHSGVDYADPEKFADAGGDRDPNQLNSHLKVGFEDVIAEPESTHSLDKVWICSHALFEVSKYVIYKFLTLFLAIPLAFAAGILFATLSCLHIWIVMPFVKTCLMVLPSVQTIWKSVTDVVIAPLCASVGRSFSSVSMQLSRD.

The Cytoplasmic portion of the chain corresponds to 1–86 (MGLETEKADV…FEVSKYVIYK (86 aa)). Tyr19 bears the Phosphotyrosine; by SRC mark. Phosphoserine is present on residues Ser20 and Ser23. Tyr27 is subject to Phosphotyrosine; by SRC. The segment at residues 87–107 (FLTLFLAIPLAFAAGILFATL) is an intramembrane region (helical). At 108-162 (SCLHIWIVMPFVKTCLMVLPSVQTIWKSVTDVVIAPLCASVGRSFSSVSMQLSRD) the chain is on the cytoplasmic side.

It belongs to the caveolin family. In terms of assembly, monomer or homodimer. Interacts with CAV1; the interaction forms a stable heterooligomeric complex that is required for targeting to lipid rafts and for caveolae formation. Tyrosine phosphorylated forms do not form heterooligomers with the Tyr-19-phosphorylated form existing as a monomer or dimer, and the Tyr-27-form as a monomer only. Interacts (tyrosine phosphorylated form) with the SH2 domain-containing proteins, RASA1, NCK1 and SRC. Interacts (tyrosine phosphorylated form) with INSR, the interaction (Tyr-27-phosphorylated form) is increased on insulin stimulation. Interacts (Tyr-19 phosphorylated form) with MAPK1 (phosphorylated form); the interaction, promoted by insulin, leads to nuclear location and MAPK1 activation. Interacts with STAT3; the interaction is increased on insulin-induced tyrosine phosphorylation leading to STAT activation. Post-translationally, phosphorylated on serine and tyrosine residues. CAV1 promotes phosphorylation on Ser-23 which then targets the complex to the plasma membrane, lipid rafts and caveolae. Phosphorylation on both Tyr-19 and Tyr-27 is required for insulin-induced 'Ser-727' phosphorylation of STAT3 and its activation. Phosphorylation on Tyr-19 is required for insulin-induced phosphorylation of MAPK1 and DNA binding of STAT3. Tyrosine phosphorylation is induced by both EGF and insulin.

Its subcellular location is the nucleus. The protein localises to the cytoplasm. It is found in the golgi apparatus membrane. It localises to the cell membrane. The protein resides in the membrane. Its subcellular location is the caveola. Functionally, may act as a scaffolding protein within caveolar membranes. Interacts directly with G-protein alpha subunits and can functionally regulate their activity. Acts as an accessory protein in conjunction with CAV1 in targeting to lipid rafts and driving caveolae formation. Positive regulator of cellular mitogenesis of the MAPK signaling pathway. Required for the insulin-stimulated nuclear translocation and activation of MAPK1 and STAT3, and the subsequent regulation of cell cycle progression. This chain is Caveolin-2 (CAV2), found in Rhinolophus ferrumequinum (Greater horseshoe bat).